The following is a 1040-amino-acid chain: Myoblast growth factor receptor egl-15 (1040 aa).

The first 19 residues, 1–19, serve as a signal peptide directing secretion; the sequence is MSYFLASCLGVGLLSTVSC. Residues 20–525 lie on the Extracellular side of the membrane; sequence SLQGLTSHYR…PKIDRWTTSD (506 aa). Residues 33-125 enclose the Ig-like C2-type 1 domain; the sequence is PRFKHVANER…GQISRNFTVE (93 aa). A disulfide bridge links Cys55 with Cys109. Asn121 is a glycosylation site (N-linked (GlcNAc...) asparagine). The span at 234 to 257 shows a compositional bias: basic and acidic residues; that stretch reads VHDSEESPSESRTEFINADEKENK. The disordered stretch occupies residues 234–267; sequence VHDSEESPSESRTEFINADEKENKEDEEEDYSVS. 2 N-linked (GlcNAc...) asparagine glycosylation sites follow: Asn280 and Asn299. 2 consecutive Ig-like C2-type domains span residues 287 to 383 and 391 to 501; these read PYFK…FHVI and PPII…ATLT. Cys314 and Cys367 form a disulfide bridge. N-linked (GlcNAc...) asparagine glycans are attached at residues Asn401, Asn407, Asn433, Asn440, Asn449, Asn474, and Asn497. The cysteines at positions 414 and 485 are disulfide-linked. Residues 526–549 form a helical membrane-spanning segment; the sequence is YIFTTILLFLLLAATLFGILFMVC. Residues 550-1040 lie on the Cytoplasmic side of the membrane; it reads KQTLHKKGFM…NNNSMSKPEF (491 aa). Residues 640 to 931 enclose the Protein kinase domain; sequence LSLVHMLGEG…KTIVDYLDWM (292 aa). Residues 646–654 and Lys672 each bind ATP; that span reads LGEGAFGEV. Asp797 acts as the Proton acceptor in catalysis. Tyr828 carries the post-translational modification Phosphotyrosine; by autocatalysis. Disordered stretches follow at residues 952-984 and 1021-1040; these read ERST…LPSE and TPET…KPEF. A compositionally biased stretch (polar residues) spans 1022–1040; it reads PETSQRIPSNNNSMSKPEF.

The protein belongs to the protein kinase superfamily. Tyr protein kinase family. Fibroblast growth factor receptor subfamily. Mg(2+) is required as a cofactor. Post-translationally, activity is regulated by the phosphatase clr-1, however it is not known whether clr-1 acts directly on egl-15.

The protein resides in the membrane. It catalyses the reaction L-tyrosyl-[protein] + ATP = O-phospho-L-tyrosyl-[protein] + ADP + H(+). In terms of biological role, receptor tyrosine kinase required for larval development. May phosphorylate adapter protein soc-1 which in turn may result in the recruitment and/or activation of phosphatase ptp-2. May activate the Ras/MAPK kinase signaling pathway which includes sem-5, sos-1, let-60/Ras, lin-45/Raf, mek-2 and mpk-1. Acts in the hypodermis to regulate axon growth and fluid homeostasis. Activates protein degradation in muscles. Probably following interaction with ligand let-756, negatively regulates membrane protrusion from body wall muscles during larval development. Plays a role in nicotinic acetylcholine receptor (nAChR)-mediated sensitivity to nicotine. Regulates synaptic levels of nAChR subunit lev-1 in the nerve cord. Affects the maintenance of axon position without affecting axon growth. Interaction with egl-17 is required for the guidance of sex myoblast migration during gonad development. Its function is as follows. Interaction with let-756 appears to play a role in maintaining body morphology at higher temperatures. The sequence is that of Myoblast growth factor receptor egl-15 (egl-15) from Caenorhabditis elegans.